The primary structure comprises 1058 residues: Carbamoyl phosphate synthase large chain (1058 aa).

Residues 1 to 401 (MPKRTDIKKI…SLLKACRSLE (401 aa)) are carboxyphosphate synthetic domain. 12 residues coordinate ATP: Arg-129, Arg-169, Gly-175, Gly-176, Lys-208, Ile-210, Glu-215, Gly-241, Ile-242, His-243, Gln-284, and Glu-298. Positions 133–327 (KALMKALKQP…IAKIAAKIAI (195 aa)) constitute an ATP-grasp 1 domain. Positions 284, 298, and 300 each coordinate Mg(2+). Residues Gln-284, Glu-298, and Asn-300 each contribute to the Mn(2+) site. Residues 402 to 546 (IGIYHNECKE…YSTYAFENES (145 aa)) are oligomerization domain. Residues 547–929 (QASPNKSILV…ALYKAFEASY (383 aa)) are carbamoyl phosphate synthetic domain. Residues 671–861 (EKALHDINIP…MAQVATKLIL (191 aa)) enclose the ATP-grasp 2 domain. 10 residues coordinate ATP: Arg-707, Ser-746, Ile-748, Glu-752, Gly-777, Val-778, His-779, Ser-780, Gln-820, and Glu-832. Mg(2+) contacts are provided by Gln-820, Glu-832, and Asn-834. 3 residues coordinate Mn(2+): Gln-820, Glu-832, and Asn-834. The region spanning 930-1058 (MHVPDFGNII…ESRSFSIQSL (129 aa)) is the MGS-like domain. The tract at residues 930–1058 (MHVPDFGNII…ESRSFSIQSL (129 aa)) is allosteric domain.

Belongs to the CarB family. In terms of assembly, composed of two chains; the small (or glutamine) chain promotes the hydrolysis of glutamine to ammonia, which is used by the large (or ammonia) chain to synthesize carbamoyl phosphate. Tetramer of heterodimers (alpha,beta)4. It depends on Mg(2+) as a cofactor. The cofactor is Mn(2+).

The enzyme catalyses hydrogencarbonate + L-glutamine + 2 ATP + H2O = carbamoyl phosphate + L-glutamate + 2 ADP + phosphate + 2 H(+). It catalyses the reaction hydrogencarbonate + NH4(+) + 2 ATP = carbamoyl phosphate + 2 ADP + phosphate + 2 H(+). It participates in amino-acid biosynthesis; L-arginine biosynthesis; carbamoyl phosphate from bicarbonate: step 1/1. It functions in the pathway pyrimidine metabolism; UMP biosynthesis via de novo pathway; (S)-dihydroorotate from bicarbonate: step 1/3. Its function is as follows. Large subunit of the glutamine-dependent carbamoyl phosphate synthetase (CPSase). CPSase catalyzes the formation of carbamoyl phosphate from the ammonia moiety of glutamine, carbonate, and phosphate donated by ATP, constituting the first step of 2 biosynthetic pathways, one leading to arginine and/or urea and the other to pyrimidine nucleotides. The large subunit (synthetase) binds the substrates ammonia (free or transferred from glutamine from the small subunit), hydrogencarbonate and ATP and carries out an ATP-coupled ligase reaction, activating hydrogencarbonate by forming carboxy phosphate which reacts with ammonia to form carbamoyl phosphate. In Streptococcus uberis (strain ATCC BAA-854 / 0140J), this protein is Carbamoyl phosphate synthase large chain.